The following is a 66-amino-acid chain: Ocellatin-PT3 (66 aa).

An N-terminal signal peptide occupies residues 1-22 (MAFLKKSLFLVLFLGLVSLSIC). A propeptide spanning residues 23 to 39 (DEEKRQDEDDDDDDDEE) is cleaved from the precursor. Position 66 is a valine amide (Val-66).

As to expression, expressed by the skin glands.

The protein localises to the secreted. Has antibacterial activity against Gram-negative bacterium E.coli ATCC 25922 (MIC=320 uM) but not against S.pneumoniae ATCC 700603, S.choleraesuis ATCC 14028 or Gram-positive bacterium S.aureus ATCC 29313. Shows no hemolytic activity and no cytotoxicity. The chain is Ocellatin-PT3 from Leptodactylus pustulatus (Ceara white-lipped frog).